A 156-amino-acid chain; its full sequence is Small ribosomal subunit protein uS7 (156 aa).

It belongs to the universal ribosomal protein uS7 family. As to quaternary structure, part of the 30S ribosomal subunit. Contacts proteins S9 and S11.

Functionally, one of the primary rRNA binding proteins, it binds directly to 16S rRNA where it nucleates assembly of the head domain of the 30S subunit. Is located at the subunit interface close to the decoding center, probably blocks exit of the E-site tRNA. The chain is Small ribosomal subunit protein uS7 from Haemophilus influenzae (strain 86-028NP).